A 162-amino-acid chain; its full sequence is Anaerobic nitrite reductase NSHB2 (162 aa).

One can recognise a Globin domain in the interval 16-159; that stretch reads SFSEEQEALV…LVAAIKQEMK (144 aa). The Homodimerization signature appears at 49–53; sequence EVAPS. Ser59, Lys73, His77, Arg100, Thr104, and His105 together coordinate heme b. The short motif at 112–124 is the Homodimerization element; it reads DAHFEVTRFALLE.

The protein belongs to the plant globin family. As to quaternary structure, homodimer. The cofactor is heme b. Mainly expressed in germinating seeds, seedlings, roots, flowers and leaves.

The protein localises to the cytoplasm. The protein resides in the nucleus. It carries out the reaction Fe(III)-heme b-[protein] + nitric oxide + H2O = Fe(II)-heme b-[protein] + nitrite + 2 H(+). Functionally, phytoglobin that reduces nitrite to nitric oxide under anoxic conditions (e.g. during flooding or in waterlogged soil). May not function as an oxygen storage or transport protein. Has an unusually high affinity for O(2) through an hexacoordinate heme iron because of a very low dissociation constant. Promotes tolerance to low potassium K(+) conditions. This Oryza sativa subsp. indica (Rice) protein is Anaerobic nitrite reductase NSHB2.